Here is a 147-residue protein sequence, read N- to C-terminus: D-aminoacyl-tRNA deacylase (147 aa).

Residues 138–139 (GP) carry the Gly-cisPro motif, important for rejection of L-amino acids motif.

It belongs to the DTD family. As to quaternary structure, homodimer.

Its subcellular location is the cytoplasm. It catalyses the reaction glycyl-tRNA(Ala) + H2O = tRNA(Ala) + glycine + H(+). The enzyme catalyses a D-aminoacyl-tRNA + H2O = a tRNA + a D-alpha-amino acid + H(+). In terms of biological role, an aminoacyl-tRNA editing enzyme that deacylates mischarged D-aminoacyl-tRNAs. Also deacylates mischarged glycyl-tRNA(Ala), protecting cells against glycine mischarging by AlaRS. Acts via tRNA-based rather than protein-based catalysis; rejects L-amino acids rather than detecting D-amino acids in the active site. By recycling D-aminoacyl-tRNA to D-amino acids and free tRNA molecules, this enzyme counteracts the toxicity associated with the formation of D-aminoacyl-tRNA entities in vivo and helps enforce protein L-homochirality. The chain is D-aminoacyl-tRNA deacylase from Prosthecochloris aestuarii (strain DSM 271 / SK 413).